The primary structure comprises 612 residues: Heparan-sulfate 6-O-sulfotransferase 2 (612 aa).

The Cytoplasmic segment spans residues 1–4; sequence MALP. Residues 5–27 traverse the membrane as a helical; Signal-anchor for type II membrane protein segment; the sequence is AFAARALGPPLQPEQGAPARTTC. Positions 9 to 52 are disordered; sequence RALGPPLQPEQGAPARTTCPRRHSRVEAELAASRPGSVAASVRA. Topologically, residues 28 to 612 are lumenal; it reads PRRHSRVEAE…DYIGSVETWR (585 aa). Residue asparagine 209 is glycosylated (N-linked (GlcNAc...) asparagine). 233–241 is a 3'-phosphoadenylyl sulfate binding site; the sequence is HIQKTGGTT. Substrate contacts are provided by residues 263 to 264, arginine 280, tryptophan 285, and histidine 290; that span reads KK. Histidine 290 acts as the Proton acceptor in catalysis. 3'-phosphoadenylyl sulfate contacts are provided by arginine 325 and serine 333. Positions 337 and 344 each coordinate substrate. An N-linked (GlcNAc...) asparagine glycan is attached at asparagine 404. Position 457–459 (457–459) interacts with 3'-phosphoadenylyl sulfate; sequence TQY. Asparagine 460 is a glycosylation site (N-linked (GlcNAc...) asparagine). 463–464 is a binding site for 3'-phosphoadenylyl sulfate; it reads RA. The tract at residues 529–612 is disordered; sequence HFQSQSQGQS…DYIGSVETWR (84 aa). Residues 531–564 are compositionally biased toward low complexity; it reads QSQSQGQSQSQSPGQNLSQNPNPNPNQNLTQNLS. Residues asparagine 546, asparagine 558, asparagine 562, asparagine 574, and asparagine 599 are each glycosylated (N-linked (GlcNAc...) asparagine). Over residues 565 to 577 the composition is skewed to polar residues; that stretch reads HNLTPSSNPNSTQ.

The protein belongs to the sulfotransferase 6 family.

It localises to the membrane. The catalysed reaction is alpha-D-glucosaminyl-[heparan sulfate](n) + 3'-phosphoadenylyl sulfate = 6-sulfo-alpha-D-glucosaminyl-[heparan sulfate](n) + adenosine 3',5'-bisphosphate + H(+). 6-O-sulfation enzyme which catalyzes the transfer of sulfate from 3'-phosphoadenosine 5'-phosphosulfate (PAPS) to position 6 of the N-sulfoglucosamine residue (GlcNS) of heparan sulfate. The chain is Heparan-sulfate 6-O-sulfotransferase 2 (Hs6st2) from Mus musculus (Mouse).